We begin with the raw amino-acid sequence, 116 residues long: Protein TRACHEARY ELEMENT DIFFERENTIATION-RELATED 6 (116 aa).

Over methionine 1–valine 24 the chain is Extracellular. Residues phenylalanine 25–isoleucine 45 form a helical membrane-spanning segment. Residues lysine 46 to serine 116 lie on the Cytoplasmic side of the membrane.

In terms of assembly, interacts with CESA7/IRX3, a subunit of the secondary cell wall (SCW)-related cellulose synthase complex. Expressed preferentially in differentiating vessel elements in seedlings.

It is found in the cell membrane. It localises to the secreted. The protein resides in the cell wall. Its function is as follows. Involved in the secondary cell wall (SCW) formation of vessel elements (e.g. protoxylem and metaxylem), thus promoting tracheary element (TE) differentiation. The polypeptide is Protein TRACHEARY ELEMENT DIFFERENTIATION-RELATED 6 (Arabidopsis thaliana (Mouse-ear cress)).